Here is a 186-residue protein sequence, read N- to C-terminus: Ribosome-recycling factor (186 aa).

Belongs to the RRF family.

It localises to the cytoplasm. Functionally, responsible for the release of ribosomes from messenger RNA at the termination of protein biosynthesis. May increase the efficiency of translation by recycling ribosomes from one round of translation to another. The sequence is that of Ribosome-recycling factor from Methylibium petroleiphilum (strain ATCC BAA-1232 / LMG 22953 / PM1).